The sequence spans 121 residues: Succinate dehydrogenase assembly factor 3, mitochondrial (121 aa).

The N-terminal 35 residues, 1 to 35 (MRPSLVRLVRPRRPERKTSPILPPLKLYKALLRAH), are a transit peptide targeting the mitochondrion.

This sequence belongs to the complex I LYR family. SDHAF3 subfamily. As to quaternary structure, interacts with the iron-sulfur protein subunit within the SDH catalytic dimer.

It localises to the mitochondrion matrix. Functionally, plays an essential role in the assembly of succinate dehydrogenase (SDH), an enzyme complex (also referred to as respiratory complex II) that is a component of both the tricarboxylic acid (TCA) cycle and the mitochondrial electron transport chain, and which couples the oxidation of succinate to fumarate with the reduction of ubiquinone (coenzyme Q) to ubiquinol. Promotes maturation of the iron-sulfur protein subunit of the SDH catalytic dimer, protecting it from the deleterious effects of oxidants. May act together with SDHAF1. The sequence is that of Succinate dehydrogenase assembly factor 3, mitochondrial from Debaryomyces hansenii (strain ATCC 36239 / CBS 767 / BCRC 21394 / JCM 1990 / NBRC 0083 / IGC 2968) (Yeast).